The sequence spans 294 residues: Bifunctional protein FolD (294 aa).

NADP(+)-binding positions include Gly-166 to Ser-168, Ser-191, and Ile-232.

It belongs to the tetrahydrofolate dehydrogenase/cyclohydrolase family. In terms of assembly, homodimer.

It catalyses the reaction (6R)-5,10-methylene-5,6,7,8-tetrahydrofolate + NADP(+) = (6R)-5,10-methenyltetrahydrofolate + NADPH. The catalysed reaction is (6R)-5,10-methenyltetrahydrofolate + H2O = (6R)-10-formyltetrahydrofolate + H(+). Its pathway is one-carbon metabolism; tetrahydrofolate interconversion. In terms of biological role, catalyzes the oxidation of 5,10-methylenetetrahydrofolate to 5,10-methenyltetrahydrofolate and then the hydrolysis of 5,10-methenyltetrahydrofolate to 10-formyltetrahydrofolate. This Nitrobacter winogradskyi (strain ATCC 25391 / DSM 10237 / CIP 104748 / NCIMB 11846 / Nb-255) protein is Bifunctional protein FolD.